A 275-amino-acid polypeptide reads, in one-letter code: Large ribosomal subunit protein uL2 (275 aa).

The tract at residues 221–275 (RGTAMNPIDHPHGGGEGKNFGKHPVSPWGVQSKGKKTRKNKRTEKYILYNRKYKK) is disordered. Basic residues predominate over residues 253–262 (KGKKTRKNKR).

It belongs to the universal ribosomal protein uL2 family. Part of the 50S ribosomal subunit. Forms a bridge to the 30S subunit in the 70S ribosome.

Functionally, one of the primary rRNA binding proteins. Required for association of the 30S and 50S subunits to form the 70S ribosome, for tRNA binding and peptide bond formation. It has been suggested to have peptidyltransferase activity; this is somewhat controversial. Makes several contacts with the 16S rRNA in the 70S ribosome. The sequence is that of Large ribosomal subunit protein uL2 from Wigglesworthia glossinidia brevipalpis.